Here is a 529-residue protein sequence, read N- to C-terminus: Bifunctional purine biosynthesis protein PurH (529 aa).

In terms of domain architecture, MGS-like spans 1–148 (MQQRRPVRRA…KNHKDVAIVV (148 aa)).

This sequence belongs to the PurH family.

It carries out the reaction (6R)-10-formyltetrahydrofolate + 5-amino-1-(5-phospho-beta-D-ribosyl)imidazole-4-carboxamide = 5-formamido-1-(5-phospho-D-ribosyl)imidazole-4-carboxamide + (6S)-5,6,7,8-tetrahydrofolate. The enzyme catalyses IMP + H2O = 5-formamido-1-(5-phospho-D-ribosyl)imidazole-4-carboxamide. It participates in purine metabolism; IMP biosynthesis via de novo pathway; 5-formamido-1-(5-phospho-D-ribosyl)imidazole-4-carboxamide from 5-amino-1-(5-phospho-D-ribosyl)imidazole-4-carboxamide (10-formyl THF route): step 1/1. Its pathway is purine metabolism; IMP biosynthesis via de novo pathway; IMP from 5-formamido-1-(5-phospho-D-ribosyl)imidazole-4-carboxamide: step 1/1. This chain is Bifunctional purine biosynthesis protein PurH, found in Citrobacter koseri (strain ATCC BAA-895 / CDC 4225-83 / SGSC4696).